Reading from the N-terminus, the 33-residue chain is Suppressor protein HFN40 (33 aa).

In terms of biological role, suppresses expansion of husk leaf blades. In Zea mays (Maize), this protein is Suppressor protein HFN40.